Here is a 592-residue protein sequence, read N- to C-terminus: Arginine--tRNA ligase (592 aa).

The 'HIGH' region motif lies at 112–122 (VNPNKELHVGH).

The protein belongs to the class-I aminoacyl-tRNA synthetase family. In terms of assembly, monomer.

The protein localises to the cytoplasm. It carries out the reaction tRNA(Arg) + L-arginine + ATP = L-arginyl-tRNA(Arg) + AMP + diphosphate. In Thermus thermophilus (strain ATCC BAA-163 / DSM 7039 / HB27), this protein is Arginine--tRNA ligase.